The primary structure comprises 413 residues: PCI domain-containing protein 2 homolog (413 aa).

In terms of domain architecture, PCI spans 222-403 (VAYNYFLGRK…QKLVISKMNA (182 aa)).

The protein belongs to the CSN12 family.

The protein is PCI domain-containing protein 2 homolog of Caenorhabditis elegans.